We begin with the raw amino-acid sequence, 186 residues long: Probable RNA 2'-phosphotransferase (186 aa).

This sequence belongs to the KptA/TPT1 family.

Functionally, removes the 2'-phosphate from RNA via an intermediate in which the phosphate is ADP-ribosylated by NAD followed by a presumed transesterification to release the RNA and generate ADP-ribose 1''-2''-cyclic phosphate (APPR&gt;P). May function as an ADP-ribosylase. The chain is Probable RNA 2'-phosphotransferase from Hahella chejuensis (strain KCTC 2396).